A 365-amino-acid chain; its full sequence is Carbamoyl phosphate synthase small chain (365 aa).

CPSase stretches follow at residues 1–166 (MKRQ…PSPG) and 1–169 (MKRQ…GRGH). L-glutamine-binding residues include S45, G218, and G220. The 188-residue stretch at 170–357 (RVVLVDFGMK…LTMIENFKKE (188 aa)) folds into the Glutamine amidotransferase type-1 domain. The active-site Nucleophile is the C245. Residues L246, Q249, N287, G289, and Y290 each coordinate L-glutamine. Residues H330 and E332 contribute to the active site.

Belongs to the CarA family. Composed of two chains; the small (or glutamine) chain promotes the hydrolysis of glutamine to ammonia, which is used by the large (or ammonia) chain to synthesize carbamoyl phosphate. Tetramer of heterodimers (alpha,beta)4.

The catalysed reaction is hydrogencarbonate + L-glutamine + 2 ATP + H2O = carbamoyl phosphate + L-glutamate + 2 ADP + phosphate + 2 H(+). It carries out the reaction L-glutamine + H2O = L-glutamate + NH4(+). The protein operates within amino-acid biosynthesis; L-arginine biosynthesis; carbamoyl phosphate from bicarbonate: step 1/1. It functions in the pathway pyrimidine metabolism; UMP biosynthesis via de novo pathway; (S)-dihydroorotate from bicarbonate: step 1/3. Small subunit of the glutamine-dependent carbamoyl phosphate synthetase (CPSase). CPSase catalyzes the formation of carbamoyl phosphate from the ammonia moiety of glutamine, carbonate, and phosphate donated by ATP, constituting the first step of 2 biosynthetic pathways, one leading to arginine and/or urea and the other to pyrimidine nucleotides. The small subunit (glutamine amidotransferase) binds and cleaves glutamine to supply the large subunit with the substrate ammonia. The protein is Carbamoyl phosphate synthase small chain of Bacillus cereus (strain ATCC 14579 / DSM 31 / CCUG 7414 / JCM 2152 / NBRC 15305 / NCIMB 9373 / NCTC 2599 / NRRL B-3711).